A 545-amino-acid polypeptide reads, in one-letter code: Acetamidase (545 aa).

Active-site charge relay system residues include K130 and S205. S229 (acyl-ester intermediate) is an active-site residue.

This sequence belongs to the amidase family.

The enzyme catalyses a monocarboxylic acid amide + H2O = a monocarboxylate + NH4(+). It carries out the reaction acetamide + H2O = acetate + NH4(+). Allows acetamide to be used as a sole carbon or nitrogen source. This Aspergillus oryzae (strain ATCC 42149 / RIB 40) (Yellow koji mold) protein is Acetamidase (amdS).